The chain runs to 156 residues: uncharacterized protein (156 aa).

Residues 10–156 enclose the N-acetyltransferase domain; it reads VAARTFPLAC…NDYVMVRELV (147 aa).

This sequence belongs to the acetyltransferase family.

This is an uncharacterized protein from Mycobacterium bovis (strain ATCC BAA-935 / AF2122/97).